The chain runs to 191 residues: Probable ribosome biogenesis protein RLP24 (191 aa).

S136 bears the Phosphoserine mark.

The protein belongs to the eukaryotic ribosomal protein eL24 family. Associated with nucleolar and cytoplasmic pre-60S particles. At the end of biogenesis it dissociates from cytoplasmic pre-60S particles and is likely to be exchanged for its ribosomal homologue, RPL24.

The protein localises to the nucleus. The protein resides in the nucleolus. Its function is as follows. Involved in the biogenesis of the 60S ribosomal subunit. Ensures the docking of NOG1 to pre-60S particles. This Drosophila melanogaster (Fruit fly) protein is Probable ribosome biogenesis protein RLP24 (RpL24-like).